Reading from the N-terminus, the 264-residue chain is Thymidylate synthase (264 aa).

Position 21 (Arg21) interacts with dUMP. His51 serves as a coordination point for (6R)-5,10-methylene-5,6,7,8-tetrahydrofolate. 126–127 (RR) is a binding site for dUMP. Cys146 serves as the catalytic Nucleophile. DUMP-binding positions include 166–169 (RSCD), Asn177, and 207–209 (HLY). Asp169 contacts (6R)-5,10-methylene-5,6,7,8-tetrahydrofolate. Ala263 contributes to the (6R)-5,10-methylene-5,6,7,8-tetrahydrofolate binding site.

It belongs to the thymidylate synthase family. Bacterial-type ThyA subfamily. As to quaternary structure, homodimer.

Its subcellular location is the cytoplasm. The catalysed reaction is dUMP + (6R)-5,10-methylene-5,6,7,8-tetrahydrofolate = 7,8-dihydrofolate + dTMP. The protein operates within pyrimidine metabolism; dTTP biosynthesis. Its function is as follows. Catalyzes the reductive methylation of 2'-deoxyuridine-5'-monophosphate (dUMP) to 2'-deoxythymidine-5'-monophosphate (dTMP) while utilizing 5,10-methylenetetrahydrofolate (mTHF) as the methyl donor and reductant in the reaction, yielding dihydrofolate (DHF) as a by-product. This enzymatic reaction provides an intracellular de novo source of dTMP, an essential precursor for DNA biosynthesis. The protein is Thymidylate synthase of Escherichia coli O9:H4 (strain HS).